A 401-amino-acid polypeptide reads, in one-letter code: Homeobox protein engrailed-1 (401 aa).

Disordered regions lie at residues 1 to 102 (MEEQ…PAAQ), 138 to 167 (GGGAAAGGGSRVERDRGQTGAGRDPVHSLG), 229 to 253 (SKPSDSGGGSGGNAGSPGAQGAKFP), and 293 to 315 (RPSSGPRTRKLKKKKNEKEDKRP). Positions 13–48 (DSGLGAVAAAAPSGLSLSLSPGASGSSGSDGDSVPV) are enriched in low complexity. Composition is skewed to pro residues over residues 49–64 (SPQPAPPSPPAAPCLP) and 73–88 (PPHPPPPPPPPPPPPQ). Residues 89 to 102 (HLAAPAHQPQPAAQ) are compositionally biased toward low complexity. 2 stretches are compositionally biased toward gly residues: residues 138-147 (GGGAAAGGGS) and 234-243 (SGGGSGGNAG). The homeobox DNA-binding region spans 312–371 (DKRPRTAFTAEQLQRLKAEFQANRYITEQRRQTLAQELSLNESQIKIWFQNKRAKIKKAT).

Belongs to the engrailed homeobox family.

It is found in the nucleus. In terms of biological role, required for proper formation of the apical ectodermal ridge and correct dorsal-ventral patterning in the limb. This is Homeobox protein engrailed-1 (En1) from Mus musculus (Mouse).